We begin with the raw amino-acid sequence, 279 residues long: Energy-coupling factor transporter ATP-binding protein EcfA1 (279 aa).

In terms of domain architecture, ABC transporter spans 6 to 240; that stretch reads VRLEHVFYKY…ADAMRAIGLG (235 aa). 40 to 47 is a binding site for ATP; it reads GHNGSGKS.

Belongs to the ABC transporter superfamily. Energy-coupling factor EcfA family. In terms of assembly, forms a stable energy-coupling factor (ECF) transporter complex composed of 2 membrane-embedded substrate-binding proteins (S component), 2 ATP-binding proteins (A component) and 2 transmembrane proteins (T component).

The protein resides in the cell membrane. Its function is as follows. ATP-binding (A) component of a common energy-coupling factor (ECF) ABC-transporter complex. Unlike classic ABC transporters this ECF transporter provides the energy necessary to transport a number of different substrates. The chain is Energy-coupling factor transporter ATP-binding protein EcfA1 from Listeria innocua serovar 6a (strain ATCC BAA-680 / CLIP 11262).